The primary structure comprises 159 residues: Biogenesis of lysosome-related organelles complex 1 subunit 2 (159 aa).

Residues 1-37 (MDKPTTSAAAAAAQDSNLLPDSPQHGPTLSSASSFEA) are disordered. Polar residues predominate over residues 14–36 (QDSNLLPDSPQHGPTLSSASSFE). Residues 69-134 (EDYKLLEEMN…KLEAAAYKLD (66 aa)) adopt a coiled-coil conformation.

The protein belongs to the BLOC1S2 family. Homodimer. Component of the biogenesis of lysosome-related organelles complex-1 (BLOC-1) composed of Blos1, Blos2, Blos3, Blos4, Dysb, Muted, Pldn and Snapin. Interacts with Snapin.

Its function is as follows. Component of the biogenesis of lysosome-related organelles complex-1 (BLOC-1) involved in pigment granule biogenesis. The chain is Biogenesis of lysosome-related organelles complex 1 subunit 2 from Drosophila melanogaster (Fruit fly).